Reading from the N-terminus, the 286-residue chain is Bifunctional protein FolD (286 aa).

Residues 165–167 (GRS) and S190 contribute to the NADP(+) site.

This sequence belongs to the tetrahydrofolate dehydrogenase/cyclohydrolase family. Homodimer.

It catalyses the reaction (6R)-5,10-methylene-5,6,7,8-tetrahydrofolate + NADP(+) = (6R)-5,10-methenyltetrahydrofolate + NADPH. The catalysed reaction is (6R)-5,10-methenyltetrahydrofolate + H2O = (6R)-10-formyltetrahydrofolate + H(+). It participates in one-carbon metabolism; tetrahydrofolate interconversion. In terms of biological role, catalyzes the oxidation of 5,10-methylenetetrahydrofolate to 5,10-methenyltetrahydrofolate and then the hydrolysis of 5,10-methenyltetrahydrofolate to 10-formyltetrahydrofolate. The sequence is that of Bifunctional protein FolD from Staphylococcus aureus (strain USA300).